A 414-amino-acid chain; its full sequence is Serine--tRNA ligase (414 aa).

230–232 lines the L-serine pocket; sequence TSE. An ATP-binding site is contributed by 261 to 263; sequence RQE. Glu-284 is a binding site for L-serine. Position 348 to 351 (348 to 351) interacts with ATP; it reads EISS. Ser-382 provides a ligand contact to L-serine.

It belongs to the class-II aminoacyl-tRNA synthetase family. Type-1 seryl-tRNA synthetase subfamily. Homodimer. The tRNA molecule binds across the dimer.

It is found in the cytoplasm. The catalysed reaction is tRNA(Ser) + L-serine + ATP = L-seryl-tRNA(Ser) + AMP + diphosphate + H(+). The enzyme catalyses tRNA(Sec) + L-serine + ATP = L-seryl-tRNA(Sec) + AMP + diphosphate + H(+). It participates in aminoacyl-tRNA biosynthesis; selenocysteinyl-tRNA(Sec) biosynthesis; L-seryl-tRNA(Sec) from L-serine and tRNA(Sec): step 1/1. Its function is as follows. Catalyzes the attachment of serine to tRNA(Ser). Is also able to aminoacylate tRNA(Sec) with serine, to form the misacylated tRNA L-seryl-tRNA(Sec), which will be further converted into selenocysteinyl-tRNA(Sec). The protein is Serine--tRNA ligase of Campylobacter concisus (strain 13826).